We begin with the raw amino-acid sequence, 177 residues long: Large ribosomal subunit protein uL6 (177 aa).

The protein belongs to the universal ribosomal protein uL6 family. In terms of assembly, part of the 50S ribosomal subunit.

Functionally, this protein binds to the 23S rRNA, and is important in its secondary structure. It is located near the subunit interface in the base of the L7/L12 stalk, and near the tRNA binding site of the peptidyltransferase center. This chain is Large ribosomal subunit protein uL6, found in Methylocella silvestris (strain DSM 15510 / CIP 108128 / LMG 27833 / NCIMB 13906 / BL2).